The chain runs to 652 residues: Maternal embryonic leucine zipper kinase (652 aa).

The Protein kinase domain occupies 13–265 (YELHETIGTG…VKHLLSHPWL (253 aa)). ATP-binding positions include 19–27 (IGTGGFAKV) and Lys42. Residue Asp134 is the Proton acceptor of the active site. Phosphothreonine; by autocatalysis is present on Thr169. Residue Ser173 is modified to Phosphoserine; by autocatalysis. The UBA-like stretch occupies residues 284–323 (VDEDCVTELSVFYKCSRTSTSRLISEWNYDHITASYLLLH). The tract at residues 328–652 (HGKPVRLKRP…VEDILSSCKV (325 aa)) is autoinhibitory region. 5 positions are modified to phosphothreonine: Thr415, Thr450, Thr452, Thr482, and Thr484. The tract at residues 443 to 492 (FLHPAPWTPTPRRKQNEKKGILTTPNKNSHTKEKNQSKETPTKKPITTGE) is disordered. The span at 472 to 484 (HTKEKNQSKETPT) shows a compositional bias: basic and acidic residues. 3 positions are modified to phosphoserine: Ser499, Ser506, and Ser518. A KA1 domain is found at 603 to 652 (SDFGKVTMQFELEVCQLSKSEMVGIRRQRLKGDAWVYKRLVEDILSSCKV).

It belongs to the protein kinase superfamily. CAMK Ser/Thr protein kinase family. SNF1 subfamily. Autophosphorylated: autophosphorylation of the T-loop at Thr-169 and Ser-173 is required for activation. Phosphorylated by the maturation promoting factor (MPF), composed of cdk1 and a cyclin-B. Also phosphorylated by some MAPK. Phosphorylated during oocyte maturation. Dephosphorylation destabilizes the protein. In terms of processing, degraded when cells exit mitosis.

The protein localises to the cell membrane. The enzyme catalyses L-seryl-[protein] + ATP = O-phospho-L-seryl-[protein] + ADP + H(+). It catalyses the reaction L-threonyl-[protein] + ATP = O-phospho-L-threonyl-[protein] + ADP + H(+). Activated by autophosphorylation of the T-loop at Thr-169 and Ser-173: in contrast to other members of the SNF1 subfamily, phosphorylation at Thr-169 is not mediated by STK11/LKB1 but via autophosphorylation instead. Functionally, serine/threonine-protein kinase involved in various processes such as cell cycle regulation, self-renewal of stem cells, apoptosis and splicing regulation. Also plays a role in primitive hematopoiesis, possibly by affecting the expression of genes critical for hematopoiesis. Plays a role in cytokinesis during early development. In Xenopus tropicalis (Western clawed frog), this protein is Maternal embryonic leucine zipper kinase (melk).